The chain runs to 460 residues: ATP synthase subunit beta (460 aa).

150–157 (GGAGVGKT) serves as a coordination point for ATP.

It belongs to the ATPase alpha/beta chains family. As to quaternary structure, F-type ATPases have 2 components, CF(1) - the catalytic core - and CF(0) - the membrane proton channel. CF(1) has five subunits: alpha(3), beta(3), gamma(1), delta(1), epsilon(1). CF(0) has three main subunits: a(1), b(2) and c(9-12). The alpha and beta chains form an alternating ring which encloses part of the gamma chain. CF(1) is attached to CF(0) by a central stalk formed by the gamma and epsilon chains, while a peripheral stalk is formed by the delta and b chains.

The protein localises to the cell inner membrane. It catalyses the reaction ATP + H2O + 4 H(+)(in) = ADP + phosphate + 5 H(+)(out). Its function is as follows. Produces ATP from ADP in the presence of a proton gradient across the membrane. The catalytic sites are hosted primarily by the beta subunits. This Yersinia enterocolitica serotype O:8 / biotype 1B (strain NCTC 13174 / 8081) protein is ATP synthase subunit beta.